Here is a 180-residue protein sequence, read N- to C-terminus: Transcription factor IBH1-like 1 (180 aa).

Residues 110–160 (KSKSASEEAAAKAKRLVKRRTQGLRNVVPGGELMSNDVLLLQETLDYIVSL) form the bHLH domain.

Belongs to the bHLH protein family.

It is found in the nucleus. In terms of biological role, functions redundandly with IBH1/BHLH158 in a regulation node known as the incoherent feed-forward loop (FFL). Acts as transcriptional repressor that negatively regulates cell and organ elongation in response to gibberellin (GA) and brassinosteroid (BR) signaling. The chain is Transcription factor IBH1-like 1 from Arabidopsis thaliana (Mouse-ear cress).